The chain runs to 125 residues: Histone H2B type 1 (125 aa).

The tract at residues 1 to 36 (MPEPAKSRPAPKKGSKKAVTKAQKKDGKERKRSRKE) is disordered. Position 2 is an N-acetylproline (Pro2). ADP-ribosyl glutamic acid is present on Glu3. Position 6 is an N6-(2-hydroxyisobutyryl)lysine; alternate (Lys6). Lys6 bears the N6-(beta-hydroxybutyryl)lysine; alternate mark. Lys6 carries the post-translational modification N6-acetyllysine; alternate. Lys6 bears the N6-butyryllysine; alternate mark. Lys6 carries the N6-crotonyllysine; alternate modification. The residue at position 6 (Lys6) is an N6-lactoyllysine; alternate. Lys6 is covalently cross-linked (Glycyl lysine isopeptide (Lys-Gly) (interchain with G-Cter in SUMO2); alternate). Ser7 is subject to ADP-ribosylserine. The span at 9 to 19 (PAPKKGSKKAV) shows a compositional bias: basic residues. Lys12 carries the N6-(beta-hydroxybutyryl)lysine; alternate modification. N6-acetyllysine; alternate occurs at positions 12 and 13. N6-crotonyllysine; alternate occurs at positions 12 and 13. Lys12 is modified (N6-lactoyllysine; alternate). An N6-(2-hydroxyisobutyryl)lysine; alternate modification is found at Lys13. A Phosphoserine; by STK4/MST1 modification is found at Ser15. An N6-acetyllysine; alternate mark is found at Lys16, Lys17, Lys21, and Lys24. An N6-crotonyllysine; alternate mark is found at Lys16, Lys17, Lys21, and Lys24. Lys16, Lys17, Lys21, and Lys24 each carry N6-lactoyllysine; alternate. N6-glutaryllysine; alternate is present on Lys17. Lys21 and Lys24 each carry N6-(2-hydroxyisobutyryl)lysine; alternate. An N6-(beta-hydroxybutyryl)lysine; alternate modification is found at Lys21. Lys21 bears the N6-butyryllysine; alternate mark. Lys21 participates in a covalent cross-link: Glycyl lysine isopeptide (Lys-Gly) (interchain with G-Cter in SUMO2); alternate. An N6-(2-hydroxyisobutyryl)lysine modification is found at Lys25. Position 35 is an N6-(2-hydroxyisobutyryl)lysine; alternate (Lys35). Lys35 bears the N6-(beta-hydroxybutyryl)lysine; alternate mark. Lys35 carries the post-translational modification N6-crotonyllysine; alternate. Lys35 is subject to N6-glutaryllysine; alternate. The residue at position 35 (Lys35) is an N6-succinyllysine; alternate. Lys35 is covalently cross-linked (Glycyl lysine isopeptide (Lys-Gly) (interchain with G-Cter in ubiquitin); alternate). The residue at position 36 (Glu36) is a PolyADP-ribosyl glutamic acid. Ser37 is subject to Phosphoserine; by AMPK. An N6-(2-hydroxyisobutyryl)lysine; alternate mark is found at Lys44, Lys47, and Lys58. Lys44 carries the post-translational modification N6-lactoyllysine; alternate. N6-glutaryllysine; alternate is present on residues Lys44 and Lys47. Residue Lys47 is modified to N6-methyllysine; alternate. At Lys58 the chain carries N6,N6-dimethyllysine; alternate. Arg79 carries the post-translational modification Dimethylated arginine. An N6-(2-hydroxyisobutyryl)lysine; alternate modification is found at Lys85. Lys85 is subject to N6-acetyllysine; alternate. N6-lactoyllysine; alternate is present on Lys85. Position 85 is an N6,N6,N6-trimethyllysine; alternate (Lys85). Residues Arg86 and Arg92 each carry the omega-N-methylarginine modification. Lys108 carries the N6-(2-hydroxyisobutyryl)lysine; alternate modification. Lys108 carries the post-translational modification N6-lactoyllysine; alternate. Lys108 carries the N6-glutaryllysine; alternate modification. N6-methyllysine; alternate is present on Lys108. The O-linked (GlcNAc) serine glycan is linked to Ser112. Thr115 carries the post-translational modification Phosphothreonine. 2 positions are modified to N6-(2-hydroxyisobutyryl)lysine; alternate: Lys116 and Lys120. An N6-(beta-hydroxybutyryl)lysine; alternate modification is found at Lys116. Lys116 and Lys120 each carry N6-lactoyllysine; alternate. N6-glutaryllysine; alternate occurs at positions 116 and 120. Lys116 and Lys120 each carry N6-succinyllysine; alternate. Lys116 carries the N6-methylated lysine; alternate modification. Lys120 participates in a covalent cross-link: Glycyl lysine isopeptide (Lys-Gly) (interchain with G-Cter in ubiquitin); alternate.

It belongs to the histone H2B family. As to quaternary structure, the nucleosome is a histone octamer containing two molecules each of H2A, H2B, H3 and H4 assembled in one H3-H4 heterotetramer and two H2A-H2B heterodimers. The octamer wraps approximately 147 bp of DNA. Monoubiquitination at Lys-35 (H2BK34Ub) by the MSL1/MSL2 dimer is required for histone H3 'Lys-4' (H3K4me) and 'Lys-79' (H3K79me) methylation and transcription activation at specific gene loci, such as HOXA9 and MEIS1 loci. Similarly, monoubiquitination at Lys-120 (H2BK120Ub) by the RNF20/40 complex gives a specific tag for epigenetic transcriptional activation and is also prerequisite for histone H3 'Lys-4' and 'Lys-79' methylation. It also functions cooperatively with the FACT dimer to stimulate elongation by RNA polymerase II. H2BK120Ub also acts as a regulator of mRNA splicing: deubiquitination by USP49 is required for efficient cotranscriptional splicing of a large set of exons. In terms of processing, phosphorylated on Ser-15 (H2BS14ph) by STK4/MST1 during apoptosis; which facilitates apoptotic chromatin condensation. Also phosphorylated on Ser-15 in response to DNA double strand breaks (DSBs), and in correlation with somatic hypermutation and immunoglobulin class-switch recombination. Phosphorylation at Ser-37 (H2BS36ph) by AMPK in response to stress promotes transcription. Post-translationally, ADP-ribosylated by PARP1 or PARP2 on Ser-7 (H2BS6ADPr) in response to DNA damage. H2BS6ADPr promotes recruitment of CHD1L. Mono-ADP-ribosylated on Glu-3 (H2BE2ADPr) by PARP3 in response to single-strand breaks. Poly ADP-ribosylation on Glu-36 (H2BE35ADPr) by PARP1 regulates adipogenesis: it inhibits phosphorylation at Ser-37 (H2BS36ph), thereby blocking expression of pro-adipogenetic genes. Crotonylation (Kcr) is specifically present in male germ cells and marks testis-specific genes in post-meiotic cells, including X-linked genes that escape sex chromosome inactivation in haploid cells. Crotonylation marks active promoters and enhancers and confers resistance to transcriptional repressors. It is also associated with post-meiotically activated genes on autosomes. In terms of processing, glcNAcylation at Ser-112 promotes monoubiquitination of Lys-120. It fluctuates in response to extracellular glucose, and associates with transcribed genes. Post-translationally, lactylated in macrophages by EP300/P300 by using lactoyl-CoA directly derived from endogenous or exogenous lactate, leading to stimulates gene transcription.

It localises to the nucleus. Its subcellular location is the chromosome. Its function is as follows. Core component of nucleosome. Nucleosomes wrap and compact DNA into chromatin, limiting DNA accessibility to the cellular machineries which require DNA as a template. Histones thereby play a central role in transcription regulation, DNA repair, DNA replication and chromosomal stability. DNA accessibility is regulated via a complex set of post-translational modifications of histones, also called histone code, and nucleosome remodeling. In terms of biological role, has broad antibacterial activity. May contribute to the formation of the functional antimicrobial barrier of the colonic epithelium, and to the bactericidal activity of amniotic fluid. The sequence is that of Histone H2B type 1 from Rattus norvegicus (Rat).